The sequence spans 114 residues: UPF0102 protein Shew_0226 (114 aa).

It belongs to the UPF0102 family.

The protein is UPF0102 protein Shew_0226 of Shewanella loihica (strain ATCC BAA-1088 / PV-4).